We begin with the raw amino-acid sequence, 230 residues long: Thiamine-triphosphatase (230 aa).

Ala2 carries the post-translational modification N-acetylalanine. Residues 5 to 201 (LIEVERKFLP…AKLIVYLQRF (197 aa)) enclose the CYTH domain. Mg(2+)-binding residues include Glu7 and Glu9. Residues Lys11, Arg55, Arg57, Lys65, and Arg125 each contribute to the substrate site. Positions 145, 157, and 159 each coordinate Mg(2+). A substrate-binding site is contributed by Glu157. Residue Lys193 coordinates substrate.

It belongs to the ThTPase family. As to quaternary structure, monomer. Requires Mg(2+) as cofactor. In terms of tissue distribution, widely expressed but at a low level.

Its subcellular location is the cytoplasm. It catalyses the reaction thiamine triphosphate + H2O = thiamine diphosphate + phosphate + H(+). Hydrolase highly specific for thiamine triphosphate (ThTP). The polypeptide is Thiamine-triphosphatase (THTPA) (Homo sapiens (Human)).